The sequence spans 341 residues: MRILGIETSCDETGIAIYDDQLGLLSHQLYSQVELHADYGGVVPELASRDHVRKTIPLIKEALVAANCTKESLDGIAYTAGPGLVGALLVGSCIGRSLAYAWNIPAIAVHHMEGHLLAPMLEENRPEFPFLALLVSGGHTLMVEVENIGEYQVLGESIDDAAGEAFDKTAKLLGLDYPGGPRLAKLAEKGEPKRFIFPRPMTTKPGLDFSFSGLKTFAANTIAKEGKDPQTQADIALAFQDAVIDTVAIKCKRALKQTGLKRLVVAGGVSANLSLRSQLAVLMKSLGGEVFYPRNEFCTDNGAMIAYAGMQRLKAGHFEGLGIQAKPRWPLDQLLSVRSEL.

Positions 111 and 115 each coordinate Fe cation. Substrate-binding positions include 134–138 (LVSGG), aspartate 167, glycine 180, and asparagine 272. Aspartate 300 lines the Fe cation pocket.

Belongs to the KAE1 / TsaD family. Fe(2+) serves as cofactor.

Its subcellular location is the cytoplasm. The enzyme catalyses L-threonylcarbamoyladenylate + adenosine(37) in tRNA = N(6)-L-threonylcarbamoyladenosine(37) in tRNA + AMP + H(+). Its function is as follows. Required for the formation of a threonylcarbamoyl group on adenosine at position 37 (t(6)A37) in tRNAs that read codons beginning with adenine. Is involved in the transfer of the threonylcarbamoyl moiety of threonylcarbamoyl-AMP (TC-AMP) to the N6 group of A37, together with TsaE and TsaB. TsaD likely plays a direct catalytic role in this reaction. The sequence is that of tRNA N6-adenosine threonylcarbamoyltransferase from Psychromonas ingrahamii (strain DSM 17664 / CCUG 51855 / 37).